The chain runs to 209 residues: MKLVVSCSSVQTIVDILDESEGENSISTLGQLRERIAADNDVDAETMKLLHRGKFLQGEADVSLSTINFKENDKIIVMGGKNAMADDAGFKMLMQYEKHNLSNLQKTYDVNLKDVADLERGFLEKPKQVEMGKKLEKKVKFFNEEAERHLETLDGMNIITDATPDNQAKRNREKRKTLINGIQTLLNQNDALLRRLEQYMSILNGDILE.

Residues 7–84 (CSSVQTIVDI…IIVMGGKNAM (78 aa)) form the Ubiquitin-like domain. The BAG domain maps to 107 to 193 (TYDVNLKDVA…TLLNQNDALL (87 aa)).

In terms of assembly, homodimer or homotetramer.

Its function is as follows. May inhibit the chaperone activity of HSP70/HSC70 by promoting substrate release in an ATP-dependent manner. This chain is BAG family molecular chaperone regulator 1 (bag-1), found in Caenorhabditis briggsae.